The following is a 159-amino-acid chain: Ribosome maturation factor RimP (159 aa).

Belongs to the RimP family.

It localises to the cytoplasm. Functionally, required for maturation of 30S ribosomal subunits. The polypeptide is Ribosome maturation factor RimP (Geotalea daltonii (strain DSM 22248 / JCM 15807 / FRC-32) (Geobacter daltonii)).